Here is a 184-residue protein sequence, read N- to C-terminus: Bifunctional protein PyrR (184 aa).

The PRPP-binding motif lies at 98–110 (VVLVDDVLYTGRT).

It belongs to the purine/pyrimidine phosphoribosyltransferase family. PyrR subfamily.

The catalysed reaction is UMP + diphosphate = 5-phospho-alpha-D-ribose 1-diphosphate + uracil. Functionally, regulates the transcription of the pyrimidine nucleotide (pyr) operon in response to exogenous pyrimidines. Also displays a weak uracil phosphoribosyltransferase activity which is not physiologically significant. The chain is Bifunctional protein PyrR from Roseiflexus castenholzii (strain DSM 13941 / HLO8).